A 965-amino-acid chain; its full sequence is Receptor-like protein 15 (965 aa).

The N-terminal stretch at 1–23 is a signal peptide; the sequence is MEGKVFLGHNLIWVMLLMGQLHG. At 24–916 the chain is on the extracellular side; the sequence is YKSCIDEEKI…GVEADESIID (893 aa). N-linked (GlcNAc...) asparagine glycans are attached at residues Asn57, Asn95, Asn109, and Asn145. LRR repeat units lie at residues 80-102, 103-127, 131-154, 156-179, 180-204, 206-230, 243-267, 268-290, 292-315, 316-341, 342-365, 366-389, 391-415, 417-435, 437-461, 462-485, and 487-512; these read EISF…LHPF, EDVR…GYKS, LRKL…FLSA, TSLT…ELRD, LTNL…ELSS, RKLK…KFCT, LNNM…LTSL, TGLR…SLGS, QSLE…SLAN, LSNL…SWKP, KFQL…LLHQ, KDLR…LLAN, TKLK…AHNL, FLDV…NIGW, FPHL…LGNM, NGIQ…FVNG, and YSMA…NFTN. The N-linked (GlcNAc...) asparagine glycan is linked to Asn194. Asn315 carries an N-linked (GlcNAc...) asparagine glycan. N-linked (GlcNAc...) asparagine glycosylation is found at Asn377 and Asn389. Residue Asn444 is glycosylated (N-linked (GlcNAc...) asparagine). Residue Asn509 is glycosylated (N-linked (GlcNAc...) asparagine). The LRR 18; degenerate repeat unit spans residues 514–533; the sequence is LGLFMDNNLFTGKIGQGLRS. LRR repeat units lie at residues 534–557, 558–582, 584–606, 608–627, 628–652, 654–674, 675–698, 778–801, 802–825, 827–850, and 851–875; these read LINL…WIGE, LPSL…LFNK, SLQL…HDSR, GVVL…DTLL, ANVE…NIQN, SILL…LCGL, SNIQ…LSNT, LKLL…EFGG, LLEL…SISS, EKME…LTEL, and TSLS…QFNT. 2 N-linked (GlcNAc...) asparagine glycosylation sites follow: Asn546 and Asn581. Residues Asn652, Asn662, Asn688, and Asn697 are each glycosylated (N-linked (GlcNAc...) asparagine). N-linked (GlcNAc...) asparagine glycosylation is found at Asn809 and Asn814. Residues Asn862, Asn893, and Asn898 are each glycosylated (N-linked (GlcNAc...) asparagine). Residues 917 to 937 form a helical membrane-spanning segment; sequence MVSFYLSFAAAYVTILIGILA. At 938–965 the chain is on the cytoplasmic side; sequence SLSFDSPWSRFWFYKVDAFIKKVRNLLL.

It belongs to the RLP family.

It is found in the cell membrane. The chain is Receptor-like protein 15 from Arabidopsis thaliana (Mouse-ear cress).